We begin with the raw amino-acid sequence, 148 residues long: UPF0260 protein Spro_2751 (148 aa).

This sequence belongs to the UPF0260 family.

The polypeptide is UPF0260 protein Spro_2751 (Serratia proteamaculans (strain 568)).